Here is a 564-residue protein sequence, read N- to C-terminus: Agglutinin (564 aa).

The N-terminal stretch at 1–24 (MYAVATWLCFGSTSGWSFTLEDNN) is a signal peptide. 32–34 (IIN) lines the beta-D-galactose pocket. Asn34 is a glycosylation site (N-linked (GlcNAc...) asparagine). Catalysis depends on residues Tyr104, Tyr147, Glu200, and Arg203. AMP contacts are provided by residues 104–105 (YV) and 145–147 (GNY). The N-linked (GlcNAc...) asparagine glycan is linked to Asn259. Cys282 and Cys306 are oxidised to a cystine. The propeptide at 291–302 (SLLIRPVVPNFN) is linker peptide. The Ricin B-type lectin 1 domain maps to 309–436 (PEPIVRIVGR…YAVSQGWLPT (128 aa)). Beta-D-galactose contacts are provided by residues Ile312, 324 to 328 (DVTGE), Gln337, Lys342, and Asn348. A 1-alpha repeat occupies 319–361 (NGLCVDVTGEEFFDGNPIQLWPCKSNTDWNQLWTLRKDSTIRS). A disulfide bridge connects residues Cys322 and Cys341. Residues 362-402 (NGKCLTISKSSPRQQVVIYNCSTATVGATRWQIWDNRTIIN) form a 1-beta repeat. Cys365 and Cys382 are oxidised to a cystine. Asn397 and Asn437 each carry an N-linked (GlcNAc...) asparagine glycan. The 1-gamma repeat unit spans residues 405–437 (SGLVLAATSGNSGTKLTVQTNIYAVSQGWLPTN). Asn437 is a beta-D-galactose binding site. The Ricin B-type lectin 2 domain occupies 439–563 (TQPFVTTIVG…GNLNQIWLPL (125 aa)). One copy of the 2-alpha repeat lies at 450-485 (YGMCLQANSGKVWLEDCTSEKAEQQWALYADGSIRP). 2 cysteine pairs are disulfide-bonded: Cys453/Cys466 and Cys492/Cys509. One copy of the 2-beta repeat lies at 489–528 (RDNCLTTDANIKGTVVKILSCGPASSGQRWMFKNDGTILN). Residues 531-558 (NGLVLDVRRSDPSLKQIIVHPFHGNLNQ) form a 2-gamma repeat.

In the N-terminal section; belongs to the ribosome-inactivating protein family. Type 2 RIP subfamily.

It catalyses the reaction Endohydrolysis of the N-glycosidic bond at one specific adenosine on the 28S rRNA.. The chain is Agglutinin from Ricinus communis (Castor bean).